A 316-amino-acid polypeptide reads, in one-letter code: Putative mannose-6-phosphate isomerase YvyI (316 aa).

Positions 98, 116, and 173 each coordinate Zn(2+). Arg193 is an active-site residue.

It belongs to the mannose-6-phosphate isomerase type 1 family. The cofactor is Zn(2+).

It catalyses the reaction D-mannose 6-phosphate = D-fructose 6-phosphate. The sequence is that of Putative mannose-6-phosphate isomerase YvyI (yvyI) from Bacillus subtilis (strain 168).